Reading from the N-terminus, the 599-residue chain is Sulfite reductase [NADPH] flavoprotein alpha-component (599 aa).

One can recognise a Flavodoxin-like domain in the interval 64–202 (VTLISASQTG…AASEWRARVV (139 aa)). Residues 70–75 (SQTGNA), 117–120 (STQG), and 153–162 (LGDTSYEFFC) contribute to the FMN site. In terms of domain architecture, FAD-binding FR-type spans 234–448 (DAPLAATLSV…IEHNDNFRLP (215 aa)). FAD is bound by residues threonine 322, alanine 356, 386 to 389 (RLYS), 404 to 406 (TVG), tyrosine 410, and 419 to 422 (GGAS). NADP(+)-binding positions include 519–520 (SR), 525–529 (KIYVQ), and aspartate 561. Tyrosine 599 contacts FAD.

Belongs to the NADPH-dependent sulphite reductase flavoprotein subunit CysJ family. The protein in the N-terminal section; belongs to the flavodoxin family. This sequence in the C-terminal section; belongs to the flavoprotein pyridine nucleotide cytochrome reductase family. As to quaternary structure, alpha(8)-beta(8). The alpha component is a flavoprotein, the beta component is a hemoprotein. The cofactor is FAD. Requires FMN as cofactor.

The catalysed reaction is hydrogen sulfide + 3 NADP(+) + 3 H2O = sulfite + 3 NADPH + 4 H(+). The protein operates within sulfur metabolism; hydrogen sulfide biosynthesis; hydrogen sulfide from sulfite (NADPH route): step 1/1. Component of the sulfite reductase complex that catalyzes the 6-electron reduction of sulfite to sulfide. This is one of several activities required for the biosynthesis of L-cysteine from sulfate. The flavoprotein component catalyzes the electron flow from NADPH -&gt; FAD -&gt; FMN to the hemoprotein component. The protein is Sulfite reductase [NADPH] flavoprotein alpha-component of Salmonella paratyphi B (strain ATCC BAA-1250 / SPB7).